The primary structure comprises 107 residues: Nucleoid-associated protein AZOSEA06390 (107 aa).

Belongs to the YbaB/EbfC family. As to quaternary structure, homodimer.

The protein resides in the cytoplasm. It localises to the nucleoid. Functionally, binds to DNA and alters its conformation. May be involved in regulation of gene expression, nucleoid organization and DNA protection. In Aromatoleum aromaticum (strain DSM 19018 / LMG 30748 / EbN1) (Azoarcus sp. (strain EbN1)), this protein is Nucleoid-associated protein AZOSEA06390.